The chain runs to 481 residues: Putative amino-acid transporter CPE0389 (481 aa).

The next 13 membrane-spanning stretches (helical) occupy residues 7–27 (LGVIALAGVVISAMLGGGVYN), 36–56 (ASAGAILISWIITGIGIWFIA), 87–107 (FLMAWGYWICNSFANVGYAVL), 127–147 (LSIACGSLVLWIIFFIVLAGV), 156–176 (IGTIGKLLPLAIFLLVLLFSF), 208–228 (STMLVTLWVFTGIEGAVVVSG), 241–261 (FLGFITCLLIYTLLSLLPLGV), 289–309 (VIMNLGVIIAILSSWLIWTVM), 338–358 (FSLLASTIIMQIILILVHFAG), 364–384 (MLSITSVMALPCYLVSTLYLF), 401–421 (RKYAMITAILGSIYGVWLIYA), 422–442 (AGINYMLIAIVIYALGIPVFI), and 461–481 (YFAIVLIILALIGLVYLFKFM).

The protein belongs to the amino acid-polyamine-organocation (APC) superfamily. Basic amino acid/polyamine antiporter (APA) (TC 2.A.3.2) family.

The protein localises to the cell membrane. Its function is as follows. Could be an amino acid transporter. The sequence is that of Putative amino-acid transporter CPE0389 from Clostridium perfringens (strain 13 / Type A).